The primary structure comprises 837 residues: MANILKTIIENDKGEIRRLEKMADKVFKYEDQMAALTDDQLKAKTVEFKERYQNGESLDSLLYEAFAVVREGAKRVLGLFPYKVQVMGGIVLHHGDVPEMRTGEGKTLTATMPVYLNALSGKGVHVVTVNEYLSERDATEMGELYSWLGLSVGINLATKSPMEKKEAYECDITYSTNSEIGFDYLRDNMVVRAENMVQRPLNYALVDEVDSILIDEARTPLIVSGANAVETSQLYHMADHYVKSLNKDDYIIDVQSKTIGLSDSGIDRAESYFKLENLYDIENVALTHFIDNALRANYIMLLDIDYVVSEEQEILIVDQFTGRTMEGRRYSDGLHQAIEAKEGVPIQDETKTSASITYQNLFRMYKKLSGMTGTGKTEEEEFREIYNIRVIPIPTNRPVQRIDHSDLLYASIESKFKAVVEDVKARYQKGQPVLVGTVAVETSDYISKKLVAAGVPHEVLNAKNHYREAQIIMNAGQRGAVTIATNMAGRGTDIKLGEGVRELGGLCVIGTERHESRRIDNQLRGRSGRQGDPGESQFYLSLEDDLMKRFGSERLKGIFERLNMSEEAIESRMLTRQVEAAQKRVEGNNYDTRKQVLQYDDVMREQREIIYTQRYDVITADRDLAPEIQAMIKRTIGRVVDGHARAKQDEKLEAILNFAKYNLLPEDSITMEDLSGLSDKAIKEELFQRALKVYDSQVSKLRDEEAVKEFQKVLILRVVDNKWTDHIDALDQLRNAVGLRGYAQNNPVVEYQAEGFRMFNDMIGSIEFDVTRLMMKAQIHEQERPQAERHISTTATRNIAAHQASMPEDLDLSQIGRNELCPCGSGKKFKNCHGKRQ.

ATP is bound by residues Q85, 103 to 107 (GEGKT), and D493. Residues C821, C823, C832, and H833 each contribute to the Zn(2+) site.

This sequence belongs to the SecA family. In terms of assembly, monomer and homodimer. Part of the essential Sec protein translocation apparatus which comprises SecA, SecYEG and auxiliary proteins SecDF. Other proteins may also be involved. It depends on Zn(2+) as a cofactor.

It is found in the cell membrane. The protein localises to the cytoplasm. It carries out the reaction ATP + H2O + cellular proteinSide 1 = ADP + phosphate + cellular proteinSide 2.. In terms of biological role, part of the Sec protein translocase complex. Interacts with the SecYEG preprotein conducting channel. Has a central role in coupling the hydrolysis of ATP to the transfer of proteins into and across the cell membrane, serving as an ATP-driven molecular motor driving the stepwise translocation of polypeptide chains across the membrane. This Streptococcus pneumoniae serotype 19F (strain G54) protein is Protein translocase subunit SecA.